We begin with the raw amino-acid sequence, 375 residues long: Glutaconyl-CoA decarboxylase subunit beta (375 aa).

11 helical membrane passes run 16 to 39 (GFVAFTWGNAVMMLVGCILLYLAI), 46 to 65 (LLLSPIAFGCILANVPRTGF), 74 to 96 (LILGGIKYEIFPPLIFMGVGAMT), 107 to 130 (TLLLGAAAQIGVFVALLGAMLLGF), 137 to 153 (AIGIIGGADGPTSIYLA), 160 to 178 (LLGAIAVAAYSYMSLVPLI), 208 to 232 (VVFPIVTTIFISLLLPSVCSLIGML), 254 to 271 (ALMNSVTIMLATGTGLTM), 284 to 302 (IICLGLVAFIGGTAGGVLF), 316 to 332 (PLIGSAGVSAVPMAARV), and 345 to 369 (FLLMHAMGPNVAGVIGTAVAAGTML).

The protein belongs to the GcdB/MmdB/OadB family. As to quaternary structure, heterooctamer consisting of two alpha, two beta, two gamma and two delta subunits. Post-translationally, the N-terminus is blocked.

The protein resides in the cell membrane. It carries out the reaction (2E)-glutaconyl-CoA + Na(+)(in) + H(+) = (2E)-butenoyl-CoA + Na(+)(out) + CO2. Its pathway is amino-acid degradation; L-glutamate degradation via hydroxyglutarate pathway; crotonoyl-CoA from L-glutamate: step 5/5. Tunnel subunit of the primary sodium pump glutaconyl-CoA decarboxylase (GCD). The polypeptide is Glutaconyl-CoA decarboxylase subunit beta (gcdB) (Acidaminococcus fermentans (strain ATCC 25085 / DSM 20731 / CCUG 9996 / CIP 106432 / VR4)).